We begin with the raw amino-acid sequence, 90 residues long: Gene 56 protein (90 aa).

The Glutaredoxin domain maps to 1-90 (MRTMFTPITI…DYYTASETGL (90 aa)). Cys16 and Cys19 form a disulfide bridge.

In Mycobacterium phage D29 (Mycobacteriophage D29), this protein is Gene 56 protein (56).